The primary structure comprises 435 residues: Serine/threonine-protein kinase 40 (435 aa).

Positions 35–332 (FILGPRLGNS…EELDSLSSII (298 aa)) constitute a Protein kinase domain. Residues 41 to 49 (LGNSPVPSI) and K66 contribute to the ATP site. The active-site Proton acceptor is the D197.

The protein belongs to the protein kinase superfamily. CAMK Ser/Thr protein kinase family.

Its subcellular location is the nucleus. The protein resides in the cytoplasm. It catalyses the reaction L-seryl-[protein] + ATP = O-phospho-L-seryl-[protein] + ADP + H(+). It carries out the reaction L-threonyl-[protein] + ATP = O-phospho-L-threonyl-[protein] + ADP + H(+). May be a negative regulator of NF-kappa-B and p53-mediated gene transcription. The polypeptide is Serine/threonine-protein kinase 40 (STK40) (Gallus gallus (Chicken)).